A 516-amino-acid polypeptide reads, in one-letter code: Endo-acting ulvan lyase (516 aa).

Positions 1 to 24 are cleaved as a signal peptide; sequence MLEKTTLKNIILIHFLMFLAVVTA. C38 and C65 are joined by a disulfide. Residues G42, N44, D62, S64, A67, and N68 each coordinate Ca(2+). Residue Y138 participates in substrate binding. K143 (proton acceptor) is an active-site residue. Substrate contacts are provided by residues 191–195 and 260–263; these read EGDGR and YRVK. Catalysis depends on Y260, which acts as the Proton donor/acceptor. A ulvan-binding domain region spans residues 289–429; that stretch reads PIGDVYKLKN…VWKAIAVESL (141 aa). A propeptide spans 430–516 (removed by the type IX secretion system (T9SS)); the sequence is SVDENAILAS…NKYHKKLIVK (87 aa).

The protein belongs to the polysaccharide lyase 28 family. It depends on Ca(2+) as a cofactor.

It localises to the secreted. Its function is as follows. Ulvan lyase involved in ulvan degradation. Ulvan is the main polysaccharide component of the Ulvales (green seaweed) cell wall. It is composed of disaccharide building blocks comprising 3-sulfated rhamnose (Rha3S) linked to D-glucuronic acid (GlcA), L-iduronic acid (IduA), or D-xylose (Xyl). Ulvan lyase catalyzes the endolytic cleavage of the glycosidic bond between Rha3S and the uronic acids GlcA or IduA, producing oligosaccharides that have unsaturated 4-deoxy-L-threo-hex-4-enopyranosiduronic acid (deltaUA) at the non-reducing end. This results eventually in the degradation of the ulvan polysaccharide into deltaUA-Rha3S disaccharides and deltaUA-Rha3S-Xyl-Rha3S tetrasaccharides. This chain is Endo-acting ulvan lyase, found in Formosa agariphila (strain DSM 15362 / KCTC 12365 / LMG 23005 / KMM 3901 / M-2Alg 35-1).